The sequence spans 586 residues: Ezrin (586 aa).

One can recognise an FERM domain in the interval 2-295 (PKPINVRVTT…GNHELYMRRR (294 aa)). Lysine 60 carries the N6-acetyllysine modification. Residues 115–120 (IYCPPE) carry the [IL]-x-C-x-x-[DE] motif motif. Residue tyrosine 146 is modified to Phosphotyrosine; by PDGFR. An interaction with SCYL3 region spans residues 244–586 (EIRNISFNDK…KQRIDEFEAM (343 aa)). The stretch at 302–462 (VQQMKAQARE…QDDLVKTKEE (161 aa)) forms a coiled coil. The interval 306–338 (KAQAREEKHQKQLERQQLETEKKRRETVEREKE) is disordered. Over residues 308-338 (QAREEKHQKQLERQQLETEKKRRETVEREKE) the composition is skewed to basic and acidic residues. Position 366 is a phosphoserine (serine 366). Position 478 is a phosphotyrosine (tyrosine 478). A Phosphoserine modification is found at serine 535. Threonine 567 is modified (phosphothreonine; by ROCK2 and PKC/PRKCI).

In terms of assembly, interacts with PODXL and NHERF2. Found in a complex with EZR, PODXL and NHERF2. Interacts with PALS1. Interacts with MCC, PLEKHG6, SCYL3/PACE1, NHERF1 and TMEM8B. Interacts (when phosphorylated) with FES/FPS. Interacts with dimeric S100P, the interaction may be activating through unmasking of F-actin binding sites. Identified in complexes that contain VIM, EZR, AHNAK, BFSP1, BFSP2, ANK2, PLEC, PRX and spectrin. Detected in a complex composed of at least EZR, AHNAK, PPL and PRX. Interacts with PDPN (via cytoplasmic domain); activates RHOA and promotes epithelial-mesenchymal transition. Interacts with SPN/CD43 cytoplasmic tail, CD44 and ICAM2. Interacts with SLC9A3; interaction targets SLC9A3 to the apical membrane. Interacts with SLC9A1; regulates interactions of SLC9A1 with cytoskeletal and promotes stress fiber formation. Interacts with CLIC5; may work together in a complex which also includes RDX and MYO6 to stabilize linkages between the plasma membrane and subjacent actin cytoskeleton at the base of stereocilia. Post-translationally, phosphorylated by tyrosine-protein kinases. Phosphorylation by ROCK2 suppresses the head-to-tail association of the N-terminal and C-terminal halves resulting in an opened conformation which is capable of actin and membrane-binding. In terms of processing, S-nitrosylation is induced by interferon-gamma and oxidatively-modified low-densitity lipoprotein (LDL(ox)) possibly implicating the iNOS-S100A8/9 transnitrosylase complex. In terms of tissue distribution, glomerular epithelium cell (podocyte). Expressed in cerebrum, cerebellum and hippocampus (at protein level). Expressed in the small intestine, lung, kidney and ovaries.

It is found in the apical cell membrane. Its subcellular location is the cell projection. The protein resides in the microvillus membrane. It localises to the ruffle membrane. The protein localises to the cytoplasm. It is found in the cell cortex. Its subcellular location is the cytoskeleton. The protein resides in the microvillus. With respect to regulation, a head-to-tail association, of the N-terminal and C-terminal halves results in a closed conformation (inactive form) which is incapable of actin or membrane-binding. Probably involved in connections of major cytoskeletal structures to the plasma membrane. In epithelial cells, required for the formation of microvilli and membrane ruffles on the apical pole. Along with PLEKHG6, required for normal macropinocytosis. The chain is Ezrin (Ezr) from Rattus norvegicus (Rat).